The following is a 417-amino-acid chain: Gamma-glutamyl phosphate reductase (417 aa).

Belongs to the gamma-glutamyl phosphate reductase family.

It is found in the cytoplasm. It carries out the reaction L-glutamate 5-semialdehyde + phosphate + NADP(+) = L-glutamyl 5-phosphate + NADPH + H(+). The protein operates within amino-acid biosynthesis; L-proline biosynthesis; L-glutamate 5-semialdehyde from L-glutamate: step 2/2. Catalyzes the NADPH-dependent reduction of L-glutamate 5-phosphate into L-glutamate 5-semialdehyde and phosphate. The product spontaneously undergoes cyclization to form 1-pyrroline-5-carboxylate. This is Gamma-glutamyl phosphate reductase from Polynucleobacter asymbioticus (strain DSM 18221 / CIP 109841 / QLW-P1DMWA-1) (Polynucleobacter necessarius subsp. asymbioticus).